The primary structure comprises 153 residues: NAD(P)H-quinone oxidoreductase subunit N (153 aa).

This sequence belongs to the complex I NdhN subunit family. In terms of assembly, NDH-1 can be composed of about 15 different subunits; different subcomplexes with different compositions have been identified which probably have different functions.

It localises to the cellular thylakoid membrane. It catalyses the reaction a plastoquinone + NADH + (n+1) H(+)(in) = a plastoquinol + NAD(+) + n H(+)(out). The enzyme catalyses a plastoquinone + NADPH + (n+1) H(+)(in) = a plastoquinol + NADP(+) + n H(+)(out). Functionally, NDH-1 shuttles electrons from an unknown electron donor, via FMN and iron-sulfur (Fe-S) centers, to quinones in the respiratory and/or the photosynthetic chain. The immediate electron acceptor for the enzyme in this species is believed to be plastoquinone. Couples the redox reaction to proton translocation, and thus conserves the redox energy in a proton gradient. Cyanobacterial NDH-1 also plays a role in inorganic carbon-concentration. The polypeptide is NAD(P)H-quinone oxidoreductase subunit N (Parasynechococcus marenigrum (strain WH8102)).